The primary structure comprises 310 residues: Methionyl-tRNA formyltransferase (310 aa).

Residue 111 to 114 (SLLP) participates in (6S)-5,6,7,8-tetrahydrofolate binding.

Belongs to the Fmt family.

It catalyses the reaction L-methionyl-tRNA(fMet) + (6R)-10-formyltetrahydrofolate = N-formyl-L-methionyl-tRNA(fMet) + (6S)-5,6,7,8-tetrahydrofolate + H(+). Functionally, attaches a formyl group to the free amino group of methionyl-tRNA(fMet). The formyl group appears to play a dual role in the initiator identity of N-formylmethionyl-tRNA by promoting its recognition by IF2 and preventing the misappropriation of this tRNA by the elongation apparatus. This Nitrobacter hamburgensis (strain DSM 10229 / NCIMB 13809 / X14) protein is Methionyl-tRNA formyltransferase.